We begin with the raw amino-acid sequence, 294 residues long: 4-hydroxy-tetrahydrodipicolinate synthase (294 aa).

Position 45 (Thr-45) interacts with pyruvate. Tyr-133 serves as the catalytic Proton donor/acceptor. Lys-161 functions as the Schiff-base intermediate with substrate in the catalytic mechanism. Ile-203 serves as a coordination point for pyruvate.

It belongs to the DapA family. Homotetramer; dimer of dimers.

The protein resides in the cytoplasm. It carries out the reaction L-aspartate 4-semialdehyde + pyruvate = (2S,4S)-4-hydroxy-2,3,4,5-tetrahydrodipicolinate + H2O + H(+). It participates in amino-acid biosynthesis; L-lysine biosynthesis via DAP pathway; (S)-tetrahydrodipicolinate from L-aspartate: step 3/4. In terms of biological role, catalyzes the condensation of (S)-aspartate-beta-semialdehyde [(S)-ASA] and pyruvate to 4-hydroxy-tetrahydrodipicolinate (HTPA). In Shewanella baltica (strain OS223), this protein is 4-hydroxy-tetrahydrodipicolinate synthase.